A 251-amino-acid chain; its full sequence is Flagellar brake protein YcgR (251 aa).

One can recognise a PilZ domain in the interval 127 to 239; the sequence is QRRDGFRVRP…ASRTLQRYID (113 aa).

Belongs to the YcgR family. In terms of assembly, monomer. Interacts with the flagellar basal bodies.

It is found in the bacterial flagellum basal body. In terms of biological role, acts as a flagellar brake, regulating swimming and swarming in a bis-(3'-5') cyclic diguanylic acid (c-di-GMP)-dependent manner. Binds 1 c-di-GMP dimer per subunit. Increasing levels of c-di-GMP lead to decreased motility. This Leptothrix cholodnii (strain ATCC 51168 / LMG 8142 / SP-6) (Leptothrix discophora (strain SP-6)) protein is Flagellar brake protein YcgR.